The sequence spans 201 residues: NADH-quinone oxidoreductase subunit C 1 (201 aa).

It belongs to the complex I 30 kDa subunit family. As to quaternary structure, NDH-1 is composed of 14 different subunits. Subunits NuoB, C, D, E, F, and G constitute the peripheral sector of the complex.

The protein localises to the cell inner membrane. The enzyme catalyses a quinone + NADH + 5 H(+)(in) = a quinol + NAD(+) + 4 H(+)(out). In terms of biological role, NDH-1 shuttles electrons from NADH, via FMN and iron-sulfur (Fe-S) centers, to quinones in the respiratory chain. The immediate electron acceptor for the enzyme in this species is believed to be ubiquinone. Couples the redox reaction to proton translocation (for every two electrons transferred, four hydrogen ions are translocated across the cytoplasmic membrane), and thus conserves the redox energy in a proton gradient. The protein is NADH-quinone oxidoreductase subunit C 1 of Rhizobium meliloti (strain 1021) (Ensifer meliloti).